A 176-amino-acid polypeptide reads, in one-letter code: Protein GrpE (176 aa).

The tract at residues 1–28 (MSEQKQEFENENAENSEHLQDENLQNIE) is disordered.

It belongs to the GrpE family. In terms of assembly, homodimer.

It is found in the cytoplasm. In terms of biological role, participates actively in the response to hyperosmotic and heat shock by preventing the aggregation of stress-denatured proteins, in association with DnaK and GrpE. It is the nucleotide exchange factor for DnaK and may function as a thermosensor. Unfolded proteins bind initially to DnaJ; upon interaction with the DnaJ-bound protein, DnaK hydrolyzes its bound ATP, resulting in the formation of a stable complex. GrpE releases ADP from DnaK; ATP binding to DnaK triggers the release of the substrate protein, thus completing the reaction cycle. Several rounds of ATP-dependent interactions between DnaJ, DnaK and GrpE are required for fully efficient folding. This Campylobacter jejuni subsp. jejuni serotype O:2 (strain ATCC 700819 / NCTC 11168) protein is Protein GrpE.